The following is a 235-amino-acid chain: Purine nucleoside phosphorylase DeoD-type (235 aa).

H4 contacts a purine D-ribonucleoside. Phosphate is bound by residues G20, R24, R43, and 87-90 (RVGT). A purine D-ribonucleoside contacts are provided by residues E162, 179–181 (EME), and 203–204 (SD). The active-site Proton donor is D204.

The protein belongs to the PNP/UDP phosphorylase family. In terms of assembly, homohexamer; trimer of homodimers.

The enzyme catalyses a purine D-ribonucleoside + phosphate = a purine nucleobase + alpha-D-ribose 1-phosphate. It carries out the reaction a purine 2'-deoxy-D-ribonucleoside + phosphate = a purine nucleobase + 2-deoxy-alpha-D-ribose 1-phosphate. Functionally, catalyzes the reversible phosphorolytic breakdown of the N-glycosidic bond in the beta-(deoxy)ribonucleoside molecules, with the formation of the corresponding free purine bases and pentose-1-phosphate. The polypeptide is Purine nucleoside phosphorylase DeoD-type (Bacillus cytotoxicus (strain DSM 22905 / CIP 110041 / 391-98 / NVH 391-98)).